Reading from the N-terminus, the 208-residue chain is Inner membrane-spanning protein YciB (208 aa).

5 helical membrane passes run 49-69 (APVLLATVVVIVATLAQILWL), 78-98 (TMLWVSLALVTALGSATIYFH), 105-125 (WKPTVLYWVMGASLLVGELVF), 150-170 (FSWVAFFAAMGCLNLWVAFNF), and 178-198 (FKLFGGMGLMLVFVLAQAFFL).

It belongs to the YciB family.

The protein resides in the cell inner membrane. Functionally, plays a role in cell envelope biogenesis, maintenance of cell envelope integrity and membrane homeostasis. The protein is Inner membrane-spanning protein YciB of Polaromonas naphthalenivorans (strain CJ2).